A 198-amino-acid polypeptide reads, in one-letter code: TM2 domain-containing protein 2 (198 aa).

The first 27 residues, 1–27 (MRWPVPPVGYLLLGGQGLLLTFSLISS), serve as a signal peptide directing secretion. Topologically, residues 28 to 128 (QNQTSPVTYP…FLRGNKPCIK (101 aa)) are extracellular. Asn-29, Asn-40, and Asn-76 each carry an N-linked (GlcNAc...) asparagine glycan. The chain crosses the membrane as a helical span at residues 129 to 149 (YTGHYFITTLLYSFFLGCFGV). Positions 131–179 (GHYFITTLLYSFFLGCFGVDRFCLGHTGTAVGKLLTLGGLGIWWFVDLI) constitute a TM2 domain. Residues 150–166 (DRFCLGHTGTAVGKLLT) are Cytoplasmic-facing. The helical transmembrane segment at 167–187 (LGGLGIWWFVDLILLITGGLM) threads the bilayer. Over 188–198 (PSDNSNWCTIY) the chain is Extracellular.

Belongs to the TM2 family.

It is found in the membrane. This is TM2 domain-containing protein 2 (tm2d2) from Xenopus tropicalis (Western clawed frog).